The chain runs to 235 residues: Cytidylate kinase (235 aa).

16–24 (GPAASGKST) is a binding site for ATP.

The protein belongs to the cytidylate kinase family. Type 1 subfamily.

Its subcellular location is the cytoplasm. It carries out the reaction CMP + ATP = CDP + ADP. The catalysed reaction is dCMP + ATP = dCDP + ADP. This chain is Cytidylate kinase, found in Chloroherpeton thalassium (strain ATCC 35110 / GB-78).